Reading from the N-terminus, the 751-residue chain is Palmitoyltransferase ZDHHC8B (751 aa).

At 1 to 13 (MPNSVGKRFKPTK) the chain is on the cytoplasmic side. Residues 14–34 (YIPVSTAATLLVGSTTLFFVF) form a helical membrane-spanning segment. The Extracellular segment spans residues 35–41 (TCPWLTK). A helical membrane pass occupies residues 42-62 (AVSPVVPLYNGIVFLFVLANF). Topologically, residues 63 to 148 (SMATFMDPGV…NCIGRRNYRY (86 aa)) are cytoplasmic. The DHHC domain maps to 104 to 154 (KWCATCHFYRPPRCSHCSVCDNCVEEFDHHCPWVNNCIGRRNYRYFFLFLL). Cysteine 134 acts as the S-palmitoyl cysteine intermediate in catalysis. A helical membrane pass occupies residues 149-169 (FFLFLLSLSVHMVGVFSFGLL). The Extracellular portion of the chain corresponds to 170–185 (FVLHHLETLSALHTTV). The chain crosses the membrane as a helical span at residues 186–206 (TLVVMCVTGLFFIPVMGLTGF). The Cytoplasmic portion of the chain corresponds to 207–751 (HMVLVARGRT…VGGTTYEISV (545 aa)). Disordered stretches follow at residues 293–346 (RSKS…PSTP), 437–461 (CTPL…SPGT), 633–659 (RSSA…GMNR), 666–685 (RSPV…SPSY), and 703–736 (HLGT…HTSV). Residues 326–338 (SQLTSSEESSLSS) are compositionally biased toward low complexity. 3 stretches are compositionally biased toward polar residues: residues 633–651 (RSSA…TSLH), 669–681 (VHQS…SVPR), and 724–733 (GTPSGTPSRH).

The protein belongs to the DHHC palmitoyltransferase family. ERF2/ZDHHC9 subfamily.

Its subcellular location is the golgi apparatus membrane. The protein localises to the mitochondrion membrane. It catalyses the reaction L-cysteinyl-[protein] + hexadecanoyl-CoA = S-hexadecanoyl-L-cysteinyl-[protein] + CoA. Its function is as follows. Palmitoyltransferase that catalyzes the addition of palmitate onto various protein substrates and therefore function in several unrelated biological processes. The polypeptide is Palmitoyltransferase ZDHHC8B (Danio rerio (Zebrafish)).